We begin with the raw amino-acid sequence, 295 residues long: Bifunctional protein FolD (295 aa).

NADP(+) contacts are provided by residues 165 to 167 (GRS), Ser190, and Ile231.

The protein belongs to the tetrahydrofolate dehydrogenase/cyclohydrolase family. In terms of assembly, homodimer.

It catalyses the reaction (6R)-5,10-methylene-5,6,7,8-tetrahydrofolate + NADP(+) = (6R)-5,10-methenyltetrahydrofolate + NADPH. The catalysed reaction is (6R)-5,10-methenyltetrahydrofolate + H2O = (6R)-10-formyltetrahydrofolate + H(+). It participates in one-carbon metabolism; tetrahydrofolate interconversion. In terms of biological role, catalyzes the oxidation of 5,10-methylenetetrahydrofolate to 5,10-methenyltetrahydrofolate and then the hydrolysis of 5,10-methenyltetrahydrofolate to 10-formyltetrahydrofolate. The chain is Bifunctional protein FolD from Nitrosomonas eutropha (strain DSM 101675 / C91 / Nm57).